The following is a 91-amino-acid chain: Ixochymostatin (91 aa).

An N-terminal signal peptide occupies residues 1 to 20 (MKTYVLQALLLTLAVAVVRA). 5 cysteine pairs are disulfide-bonded: Cys-34–Cys-70, Cys-43–Cys-66, Cys-48–Cys-62, Cys-53–Cys-90, and Cys-72–Cys-84. The 57-residue stretch at 34–90 (CAEGETWKECVGSSCAELTCEHPEPSLGCTYDCNYGCYCAPDFFRNANKECVKKDKC) folds into the TIL domain.

Belongs to the serine protease inhibitor-like (TIL domain-containing) family. As to expression, salivary gland. Midgut.

The protein resides in the secreted. Functionally, tight-binding competitive inhibitor of chymotrypsin-like proteases; inhibits host chymase, cathepsin G (CTSG) and chymotrypsin. Inhibits chymase-mediated generation of vasoconstrictor peptides: angiotensin II and endothelin I. Reduces chymase-mediated vascular permeability and vascular endothelial-cadherin degradation. This Ixodes scapularis (Black-legged tick) protein is Ixochymostatin.